A 188-amino-acid polypeptide reads, in one-letter code: Elongation factor P (188 aa).

It belongs to the elongation factor P family.

The protein localises to the cytoplasm. The protein operates within protein biosynthesis; polypeptide chain elongation. Involved in peptide bond synthesis. Stimulates efficient translation and peptide-bond synthesis on native or reconstituted 70S ribosomes in vitro. Probably functions indirectly by altering the affinity of the ribosome for aminoacyl-tRNA, thus increasing their reactivity as acceptors for peptidyl transferase. This is Elongation factor P from Ureaplasma urealyticum serovar 10 (strain ATCC 33699 / Western).